Here is a 455-residue protein sequence, read N- to C-terminus: tRNA modification GTPase MnmE (455 aa).

Arg-24, Glu-81, and Lys-121 together coordinate (6S)-5-formyl-5,6,7,8-tetrahydrofolate. In terms of domain architecture, TrmE-type G spans 217–378; it reads GMKVVIAGRP…LREHLKDCMG (162 aa). Asn-227 serves as a coordination point for K(+). GTP contacts are provided by residues 227–232, 246–252, 271–274, and 359–361; these read NAGKSS, TDIAGTT, DTAG, and SAR. Ser-231 serves as a coordination point for Mg(2+). K(+) contacts are provided by Thr-246, Ile-248, and Thr-251. Thr-252 is a binding site for Mg(2+). Lys-455 is a (6S)-5-formyl-5,6,7,8-tetrahydrofolate binding site.

It belongs to the TRAFAC class TrmE-Era-EngA-EngB-Septin-like GTPase superfamily. TrmE GTPase family. As to quaternary structure, homodimer. Heterotetramer of two MnmE and two MnmG subunits. It depends on K(+) as a cofactor.

The protein localises to the cytoplasm. In terms of biological role, exhibits a very high intrinsic GTPase hydrolysis rate. Involved in the addition of a carboxymethylaminomethyl (cmnm) group at the wobble position (U34) of certain tRNAs, forming tRNA-cmnm(5)s(2)U34. This chain is tRNA modification GTPase MnmE, found in Photobacterium profundum (strain SS9).